The sequence spans 333 residues: 4-hydroxy-2-oxovalerate aldolase (333 aa).

In terms of domain architecture, Pyruvate carboxyltransferase spans 3-253; that stretch reads ILINDSTLRD…NTGIDLYHFL (251 aa). 11–12 serves as a coordination point for substrate; that stretch reads RD. A Mn(2+)-binding site is contributed by D12. Catalysis depends on H15, which acts as the Proton acceptor. The substrate site is built by S165 and H192. Residues H192 and H194 each coordinate Mn(2+).

The protein belongs to the 4-hydroxy-2-oxovalerate aldolase family. Interacts with MhpF.

It catalyses the reaction (S)-4-hydroxy-2-oxopentanoate = acetaldehyde + pyruvate. Its pathway is aromatic compound metabolism; 3-phenylpropanoate degradation. Functionally, catalyzes the retro-aldol cleavage of 4-hydroxy-2-oxopentanoate to pyruvate and acetaldehyde. Is involved in the meta-cleavage pathway for the degradation of aromatic compounds. The chain is 4-hydroxy-2-oxovalerate aldolase from Serratia proteamaculans (strain 568).